We begin with the raw amino-acid sequence, 536 residues long: Probable cytochrome P450 12a5, mitochondrial (536 aa).

A heme-binding site is contributed by cysteine 482.

The protein belongs to the cytochrome P450 family. Requires heme as cofactor.

Its subcellular location is the mitochondrion membrane. The chain is Probable cytochrome P450 12a5, mitochondrial (Cyp12a5) from Drosophila melanogaster (Fruit fly).